A 331-amino-acid chain; its full sequence is 6-phosphogluconolactonase (331 aa).

The protein belongs to the cycloisomerase 2 family.

The catalysed reaction is 6-phospho-D-glucono-1,5-lactone + H2O = 6-phospho-D-gluconate + H(+). It functions in the pathway carbohydrate degradation; pentose phosphate pathway; D-ribulose 5-phosphate from D-glucose 6-phosphate (oxidative stage): step 2/3. Its function is as follows. Catalyzes the hydrolysis of 6-phosphogluconolactone to 6-phosphogluconate. The polypeptide is 6-phosphogluconolactonase (Salmonella gallinarum (strain 287/91 / NCTC 13346)).